The chain runs to 331 residues: ADP-L-glycero-D-manno-heptose-6-epimerase (331 aa).

NADP(+) is bound by residues 11-12 (FI), 32-33 (DN), Lys-39, Lys-54, 75-79 (EGACS), and Asn-92. Tyr-139 (proton acceptor) is an active-site residue. Lys-143 lines the NADP(+) pocket. Asn-168 contacts substrate. The NADP(+) site is built by Val-169 and Lys-177. Lys-177 functions as the Proton acceptor in the catalytic mechanism. Residues Arg-179, His-186, 200–203 (FGEY), Arg-213, and Tyr-292 each bind substrate.

The protein belongs to the NAD(P)-dependent epimerase/dehydratase family. HldD subfamily. As to quaternary structure, homopentamer. NADP(+) serves as cofactor.

The enzyme catalyses ADP-D-glycero-beta-D-manno-heptose = ADP-L-glycero-beta-D-manno-heptose. Its pathway is nucleotide-sugar biosynthesis; ADP-L-glycero-beta-D-manno-heptose biosynthesis; ADP-L-glycero-beta-D-manno-heptose from D-glycero-beta-D-manno-heptose 7-phosphate: step 4/4. Its function is as follows. Catalyzes the interconversion between ADP-D-glycero-beta-D-manno-heptose and ADP-L-glycero-beta-D-manno-heptose via an epimerization at carbon 6 of the heptose. The protein is ADP-L-glycero-D-manno-heptose-6-epimerase of Cupriavidus metallidurans (strain ATCC 43123 / DSM 2839 / NBRC 102507 / CH34) (Ralstonia metallidurans).